The following is a 194-amino-acid chain: Isopentenyl-diphosphate Delta-isomerase (194 aa).

Residues His-35 and His-42 each coordinate Mn(2+). The Nudix hydrolase domain maps to 40 to 174 (PLHLAFSSYL…PWALSPWSVD (135 aa)). Cys-77 is a catalytic residue. His-79 contacts Mn(2+). Glu-97 is a binding site for Mg(2+). Positions 124 and 126 each coordinate Mn(2+). The active site involves Glu-126.

Belongs to the IPP isomerase type 1 family. Mg(2+) is required as a cofactor. Mn(2+) serves as cofactor.

The protein resides in the cytoplasm. It carries out the reaction isopentenyl diphosphate = dimethylallyl diphosphate. It participates in isoprenoid biosynthesis; dimethylallyl diphosphate biosynthesis; dimethylallyl diphosphate from isopentenyl diphosphate: step 1/1. In terms of biological role, catalyzes the 1,3-allylic rearrangement of the homoallylic substrate isopentenyl (IPP) to its highly electrophilic allylic isomer, dimethylallyl diphosphate (DMAPP). This is Isopentenyl-diphosphate Delta-isomerase from Frankia alni (strain DSM 45986 / CECT 9034 / ACN14a).